The chain runs to 219 residues: Probable GTP-binding protein EngB (219 aa).

The region spanning 31–205 (VGVEIAFAGR…LSILNEWCHP (175 aa)) is the EngB-type G domain. GTP-binding positions include 39–46 (GRSNAGKS), 66–70 (GRTQL), 84–87 (DLPG), 151–154 (TKSD), and 184–186 (FSS). Mg(2+) is bound by residues S46 and T68.

Belongs to the TRAFAC class TrmE-Era-EngA-EngB-Septin-like GTPase superfamily. EngB GTPase family. The cofactor is Mg(2+).

Necessary for normal cell division and for the maintenance of normal septation. This chain is Probable GTP-binding protein EngB, found in Shewanella denitrificans (strain OS217 / ATCC BAA-1090 / DSM 15013).